Reading from the N-terminus, the 637-residue chain is Delta(14)-sterol reductase LBR (637 aa).

Residues 1–62 enclose the Tudor domain; it reads MPNRKYADGE…DIRLQSSFKQ (62 aa). The Nuclear portion of the chain corresponds to 1 to 205; that stretch reads MPNRKYADGE…KTKELEFGGR (205 aa). Residues 57–73 are compositionally biased toward low complexity; the sequence is QSSFKQRKSQSSSSSPS. The tract at residues 57–151 is disordered; the sequence is QSSFKQRKSQ…SKLLEQQKLK (95 aa). A compositionally biased stretch (basic residues) spans 74–97; sequence RRSRSRSRSRSPGRPAKGRRRSSS. Residues Ser95 and Ser96 each carry the phosphoserine; by PKA modification. 2 stretches are compositionally biased toward basic and acidic residues: residues 98–110 and 124–151; these read HSRE…KKII and NTRR…QKLK. A run of 8 helical transmembrane segments spans residues 206–226, 250–270, 288–309, 317–338, 378–399, 403–425, 466–486, and 554–574; these read FGTF…VLMC, VFGV…LPIG, INGF…YFQF, HFVQ…YLYI, YFCE…MLLA, IHNQ…LYVV, FYLV…ITIL, and PCGF…CLLV.

It belongs to the ERG4/ERG24 family. Interacts with DNA. Interaction with DNA is sequence independent with higher affinity for supercoiled and relaxed circular DNA than linear DNA.

The protein resides in the nucleus inner membrane. It is found in the nucleus. The protein localises to the cytoplasm. It localises to the endoplasmic reticulum membrane. It carries out the reaction 5alpha-cholest-8,14-dien-3beta-ol + NADPH + H(+) = 5alpha-cholest-8-en-3beta-ol + NADP(+). The enzyme catalyses 4,4-dimethyl-5alpha-cholesta-8,24-dien-3beta-ol + NADP(+) = 4,4-dimethyl-5alpha-cholesta-8,14,24-trien-3beta-ol + NADPH + H(+). It catalyses the reaction 4,4-dimethyl-8,14-cholestadien-3beta-ol + NADPH + H(+) = 4,4-dimethyl-5alpha-cholest-8-en-3beta-ol + NADP(+). It functions in the pathway steroid biosynthesis; cholesterol biosynthesis. In terms of biological role, catalyzes the reduction of the C14-unsaturated bond of lanosterol, as part of the metabolic pathway leading to cholesterol biosynthesis. Anchors the lamina and the heterochromatin to the inner nuclear membrane. The chain is Delta(14)-sterol reductase LBR (LBR) from Gallus gallus (Chicken).